Reading from the N-terminus, the 190-residue chain is Holliday junction branch migration complex subunit RuvA (190 aa).

The domain I stretch occupies residues 1–63 (MIRKINATIE…EWNTSLYIFK (63 aa)). Residues 64–138 (DKIERDVFES…NSFSAYSTGA (75 aa)) are domain II. A flexible linker region spans residues 138–142 (ADTQS). The domain III stretch occupies residues 143–190 (YGNNNLKEAIEALETLGFQRYEIMKVIGQLDLEDLKTEEIIKECLTRL).

The protein belongs to the RuvA family. In terms of assembly, homotetramer. Forms an RuvA(8)-RuvB(12)-Holliday junction (HJ) complex. HJ DNA is sandwiched between 2 RuvA tetramers; dsDNA enters through RuvA and exits via RuvB. An RuvB hexamer assembles on each DNA strand where it exits the tetramer. Each RuvB hexamer is contacted by two RuvA subunits (via domain III) on 2 adjacent RuvB subunits; this complex drives branch migration. In the full resolvosome a probable DNA-RuvA(4)-RuvB(12)-RuvC(2) complex forms which resolves the HJ.

It localises to the cytoplasm. The RuvA-RuvB-RuvC complex processes Holliday junction (HJ) DNA during genetic recombination and DNA repair, while the RuvA-RuvB complex plays an important role in the rescue of blocked DNA replication forks via replication fork reversal (RFR). RuvA specifically binds to HJ cruciform DNA, conferring on it an open structure. The RuvB hexamer acts as an ATP-dependent pump, pulling dsDNA into and through the RuvAB complex. HJ branch migration allows RuvC to scan DNA until it finds its consensus sequence, where it cleaves and resolves the cruciform DNA. This chain is Holliday junction branch migration complex subunit RuvA, found in Petrotoga mobilis (strain DSM 10674 / SJ95).